The sequence spans 1016 residues: MAIHPSKGTGGSKQSNSGARFRQRKISVKQPLTIYKQSDLPTLNASNDLEPSQIHHLNSNANQQQRDIHAIETGVDKNEEDEVHLQQVINAAQKVLLGSQNEDGDKKKDDSDKKTDASVYIPTPDASRIWTDASKYYNDKSFREPETYIKFSATVEDTVGVEFNMDEIDEEFLKNKLWKNYPKVKSPKVKSEKLDDTNKENDNARKCSEVEFEIICDKLEKIIEEKQPFLSMDPSNILSFKELSAYIIEEFNNSNKDKPYVQLGSNLKYISTTALKEKLSKELSFEPFVTLFDKSLLDQTSTNIVRPIPKLLELFGEPVYEHWKYRKIERKGKQIHPALKFEDPSANEKDNDNDPYICFRRREFRQARKTRRADTLGAERIRLLQKSMHRARDLVMSVCRRELIKLENWETDHAIFKLRSDAKNLKRVVGVKGDDFLFYPHKRKKIIKVKEEDEDKESSKIKRDKRSRFDSSREGSATSMPGSATIGTNAINKDRLANGQVHHTQEASSSSQPYVKLPPSKIPDMGLVTVSLVLKEKNETIKRAVLEKLRKRKEQDKDFINVTDDPYQPFFNIATNTKFKNNELKHIPYSSIAATSFHEINTTNYISEKLKNLLEEGKKPLPGTKTFRGSNGELIPSKPFPHLSALIQDRIDNSQFNSVSYIAQLLSNIENNNFSAYNNGYGQQQQHQHQETNRDKTKLSDPIFRLRKRVGRFNRNFVDRRGLMKRPNDVIDDFLKFDDEGVNDDCDQMDVDSESISKNNVPNVYDSRVDEIKRLDSRWQFDNDLTEYDKGLQSPFSLDPSRLNCISDDTQSIRFGSMLLSKSYDLLRDSVHQRQQALVQQARMRTLQQQQRNNKQQAAGQSSGSSSASLGSNTNSNSSISGQADQGQTNLTNSGITRQGGANVNGSQTSTTNNTRSSVSGGSMNPKLPTQSSQRSNTNSPLLASQPQGYSQQQKFNKIPPTSQSQSQSPTHAAGQLQTSKMYNKHGSNITPSNLKGPKFTPANNNQIGGSLPNRK.

Disordered regions lie at residues 1–50 (MAIH…NDLE), 96–119 (LLGSQNEDGDKKKDDSDKKTDASV), 450–488 (KEEDEDKESSKIKRDKRSRFDSSREGSATSMPGSATIGT), 499–518 (GQVHHTQEASSSSQPYVKLP), and 842–1016 (ARMR…PNRK). Residues 35-50 (YKQSDLPTLNASNDLE) show a composition bias toward polar residues. Basic and acidic residues-rich tracts occupy residues 103–116 (DGDKKKDDSDKKTD) and 457–473 (ESSKIKRDKRSRFDSSR). The segment covering 475–488 (GSATSMPGSATIGT) has biased composition (polar residues). Over residues 842–883 (ARMRTLQQQQRNNKQQAAGQSSGSSSASLGSNTNSNSSISGQ) the composition is skewed to low complexity. Over residues 884-902 (ADQGQTNLTNSGITRQGGA) the composition is skewed to polar residues. A compositionally biased stretch (low complexity) spans 904-923 (VNGSQTSTTNNTRSSVSGGS). Polar residues predominate over residues 928-956 (LPTQSSQRSNTNSPLLASQPQGYSQQQKF). Residues 960–971 (PPTSQSQSQSPT) show a composition bias toward low complexity. Positions 976–994 (QLQTSKMYNKHGSNITPSN) are enriched in polar residues.

It belongs to the enhancer of polycomb family. Component of the NuA4 histone acetyltransferase complex.

It localises to the nucleus. Functionally, component of the NuA4 histone acetyltransferase complex which is involved in transcriptional activation of selected genes principally by acetylation of nucleosomal histone H4 and H2A. The NuA4 complex is also involved in DNA repair. Involved in gene silencing by neighboring heterochromatin, blockage of the silencing spreading along the chromosome, and required for cell cycle progression through G2/M. The protein is Enhancer of polycomb-like protein 1 (EPL1) of Debaryomyces hansenii (strain ATCC 36239 / CBS 767 / BCRC 21394 / JCM 1990 / NBRC 0083 / IGC 2968) (Yeast).